The primary structure comprises 505 residues: ATP synthase subunit alpha (505 aa).

170–177 (GDRQTGKT) lines the ATP pocket.

This sequence belongs to the ATPase alpha/beta chains family. In terms of assembly, F-type ATPases have 2 components, CF(1) - the catalytic core - and CF(0) - the membrane proton channel. CF(1) has five subunits: alpha(3), beta(3), gamma(1), delta(1), epsilon(1). CF(0) has four main subunits: a(1), b(1), b'(1) and c(9-12).

The protein localises to the cellular thylakoid membrane. The enzyme catalyses ATP + H2O + 4 H(+)(in) = ADP + phosphate + 5 H(+)(out). Produces ATP from ADP in the presence of a proton gradient across the membrane. The alpha chain is a regulatory subunit. The sequence is that of ATP synthase subunit alpha from Synechococcus elongatus (strain ATCC 33912 / PCC 7942 / FACHB-805) (Anacystis nidulans R2).